The chain runs to 108 residues: Cell wall protein PGA48 (108 aa).

The signal sequence occupies residues 1–17 (MFKFVIYLFTFIAFANA). N-linked (GlcNAc...) asparagine glycosylation is found at N18, N41, and N77. Residue N84 is the site of GPI-anchor amidated asparagine attachment. A propeptide spans 85–108 (GASKLNLRSLAGAGLVAAIFIAFI) (removed in mature form).

Belongs to the SED1 family. In terms of processing, the GPI-anchor is attached to the protein in the endoplasmic reticulum and serves to target the protein to the cell surface. There, the glucosamine-inositol phospholipid moiety is cleaved off and the GPI-modified mannoprotein is covalently attached via its lipidless GPI glycan remnant to the 1,6-beta-glucan of the outer cell wall layer.

It is found in the secreted. The protein resides in the cell wall. The protein localises to the membrane. Its function is as follows. Cell wall protein that plays a role in adaptation and resistance to cell wall stress. This is Cell wall protein PGA48 (PGA48) from Candida albicans (strain SC5314 / ATCC MYA-2876) (Yeast).